The chain runs to 256 residues: MLKIVILLSAVVCALGGTVPEGLLPQLDGRIVGGSATTISSFPWQISLQRSGSHSCGGSIYSANIIVTAAHCLQSVSASVLQVRAGSTYWSSGGVVAKVSSFKNHEGYNANTMVNDIAVIRLSSSLSFSSSIKAISLATYNPANGASAAVSGWGTQSSGSSSIPSQLQYVNVNIVSQSQCASSTYGYGSQIRNTMICAAASGKDACQGDSGGPLVSGGVLVGVVSWGYGCAYSNYPGVYADVAVLRSWVVSTANSI.

The N-terminal stretch at 1 to 22 is a signal peptide; it reads MLKIVILLSAVVCALGGTVPEG. The propeptide at 23–30 is activation peptide; that stretch reads LLPQLDGR. The Peptidase S1 domain occupies 31 to 254; the sequence is IVGGSATTIS…LRSWVVSTAN (224 aa). An intrachain disulfide couples cysteine 56 to cysteine 72. Active-site charge relay system residues include histidine 71 and aspartate 116. Intrachain disulfides connect cysteine 180–cysteine 197 and cysteine 206–cysteine 230. Serine 210 functions as the Charge relay system in the catalytic mechanism.

It belongs to the peptidase S1 family. As to expression, synthesized in the midgut of both larvae and adults, primarily in the ventriculus and gastric caeca.

The protein localises to the secreted. It is found in the extracellular space. It carries out the reaction Preferential cleavage: Arg-|-Xaa, Lys-|-Xaa.. The sequence is that of Trypsin alpha (alphaTry) from Drosophila melanogaster (Fruit fly).